The chain runs to 471 residues: 3-isopropylmalate dehydratase large subunit (471 aa).

The [4Fe-4S] cluster site is built by Cys351, Cys412, and Cys415.

Belongs to the aconitase/IPM isomerase family. LeuC type 1 subfamily. In terms of assembly, heterodimer of LeuC and LeuD. Requires [4Fe-4S] cluster as cofactor.

It carries out the reaction (2R,3S)-3-isopropylmalate = (2S)-2-isopropylmalate. It participates in amino-acid biosynthesis; L-leucine biosynthesis; L-leucine from 3-methyl-2-oxobutanoate: step 2/4. In terms of biological role, catalyzes the isomerization between 2-isopropylmalate and 3-isopropylmalate, via the formation of 2-isopropylmaleate. This is 3-isopropylmalate dehydratase large subunit from Hahella chejuensis (strain KCTC 2396).